A 178-amino-acid chain; its full sequence is Gluconokinase (178 aa).

19-26 (GVSGTGKT) provides a ligand contact to ATP.

Belongs to the gluconokinase GntK/GntV family. As to quaternary structure, monomer.

The enzyme catalyses D-gluconate + ATP = 6-phospho-D-gluconate + ADP + H(+). It functions in the pathway carbohydrate acid metabolism; D-gluconate degradation. Activated by magnesium. In terms of biological role, phosphorylates gluconate to 6-phosphogluconate. The sequence is that of Gluconokinase from Gluconobacter oxydans (strain 621H) (Gluconobacter suboxydans).